The sequence spans 205 residues: Guanylate kinase (205 aa).

The 179-residue stretch at 7–185 (GNIFIISAAS…AEEDLRHIVN (179 aa)) folds into the Guanylate kinase-like domain. 14–21 (AASGTGKT) contributes to the ATP binding site.

The protein belongs to the guanylate kinase family.

Its subcellular location is the cytoplasm. The enzyme catalyses GMP + ATP = GDP + ADP. Its function is as follows. Essential for recycling GMP and indirectly, cGMP. The sequence is that of Guanylate kinase (gmk) from Neisseria meningitidis serogroup B (strain ATCC BAA-335 / MC58).